The chain runs to 363 residues: UDP-N-acetylglucosamine--N-acetylmuramyl-(pentapeptide) pyrophosphoryl-undecaprenol N-acetylglucosamine transferase (363 aa).

UDP-N-acetyl-alpha-D-glucosamine is bound by residues 10-12 (TGG), Asn124, Ser195, Ile250, and Gln295.

It belongs to the glycosyltransferase 28 family. MurG subfamily.

It localises to the cell membrane. The enzyme catalyses di-trans,octa-cis-undecaprenyl diphospho-N-acetyl-alpha-D-muramoyl-L-alanyl-D-glutamyl-meso-2,6-diaminopimeloyl-D-alanyl-D-alanine + UDP-N-acetyl-alpha-D-glucosamine = di-trans,octa-cis-undecaprenyl diphospho-[N-acetyl-alpha-D-glucosaminyl-(1-&gt;4)]-N-acetyl-alpha-D-muramoyl-L-alanyl-D-glutamyl-meso-2,6-diaminopimeloyl-D-alanyl-D-alanine + UDP + H(+). It functions in the pathway cell wall biogenesis; peptidoglycan biosynthesis. Cell wall formation. Catalyzes the transfer of a GlcNAc subunit on undecaprenyl-pyrophosphoryl-MurNAc-pentapeptide (lipid intermediate I) to form undecaprenyl-pyrophosphoryl-MurNAc-(pentapeptide)GlcNAc (lipid intermediate II). This is UDP-N-acetylglucosamine--N-acetylmuramyl-(pentapeptide) pyrophosphoryl-undecaprenol N-acetylglucosamine transferase from Listeria monocytogenes serotype 4a (strain HCC23).